A 294-amino-acid chain; its full sequence is tRNA dimethylallyltransferase (294 aa).

10–17 (GPTAVGKT) serves as a coordination point for ATP. 12 to 17 (TAVGKT) serves as a coordination point for substrate. Residues 35 to 38 (DSQQ) form an interaction with substrate tRNA region.

The protein belongs to the IPP transferase family. In terms of assembly, monomer. Requires Mg(2+) as cofactor.

The catalysed reaction is adenosine(37) in tRNA + dimethylallyl diphosphate = N(6)-dimethylallyladenosine(37) in tRNA + diphosphate. Catalyzes the transfer of a dimethylallyl group onto the adenine at position 37 in tRNAs that read codons beginning with uridine, leading to the formation of N6-(dimethylallyl)adenosine (i(6)A). The sequence is that of tRNA dimethylallyltransferase from Streptococcus pneumoniae (strain ATCC 700669 / Spain 23F-1).